Consider the following 229-residue polypeptide: GTP cyclohydrolase 1 (229 aa).

The tract at residues 1 to 21 (MDAKIKPLRAGKSADARTDFQ) is disordered. 3 residues coordinate Zn(2+): Cys-118, His-121, and Cys-189.

This sequence belongs to the GTP cyclohydrolase I family. Toroid-shaped homodecamer, composed of two pentamers of five dimers.

The catalysed reaction is GTP + H2O = 7,8-dihydroneopterin 3'-triphosphate + formate + H(+). Its pathway is cofactor biosynthesis; 7,8-dihydroneopterin triphosphate biosynthesis; 7,8-dihydroneopterin triphosphate from GTP: step 1/1. The protein is GTP cyclohydrolase 1 of Rhodopseudomonas palustris (strain HaA2).